A 465-amino-acid polypeptide reads, in one-letter code: Serine/threonine-protein kinase 38 (465 aa).

At Ala-2 the chain carries N-acetylalanine. The tract at residues 62–87 is interaction with S100B; sequence KRLRRSAHARKETEFLRLKRTRLGLE. Position 74 is a phosphothreonine (Thr-74). A Protein kinase domain is found at 89–382; it reads FESLKVIGRG…VEEIKSNSFF (294 aa). ATP is bound by residues 95–103 and Lys-118; that span reads IGRGAFGEV. Asp-212 (proton acceptor) is an active-site residue. At Ser-264 the chain carries Phosphoserine. Ser-281 is subject to Phosphoserine; by autocatalysis. Positions 306–311 match the UFM1-interacting motif (UFIM) motif; the sequence is WSLGVI. In terms of domain architecture, AGC-kinase C-terminal spans 383 to 455; the sequence is EGVDWEHIRE…KRFEGLTARG (73 aa). A Phosphothreonine; by STK24/MST3 modification is found at Thr-444.

It belongs to the protein kinase superfamily. AGC Ser/Thr protein kinase family. Homodimeric S100B binds two molecules of STK38. Interacts with MOB1 and MOB2. Interacts with MAP3K1 and MAP3K2 (via the kinase catalytic domain). Forms a tripartite complex with MOBKL1B and STK3/MST2. Interacts with MICAL1; leading to inhibit the protein kinase activity by antagonizing activation by MST1/STK4. Mg(2+) serves as cofactor. Post-translationally, ISGylated. In terms of processing, phosphorylated by STK3/MST2 and this is enhanced by MOBKL1B. In terms of tissue distribution, ubiquitously expressed with highest levels observed in peripheral blood leukocytes.

The protein localises to the nucleus. Its subcellular location is the cytoplasm. It is found in the chromosome. The catalysed reaction is L-seryl-[protein] + ATP = O-phospho-L-seryl-[protein] + ADP + H(+). The enzyme catalyses L-threonyl-[protein] + ATP = O-phospho-L-threonyl-[protein] + ADP + H(+). Its activity is regulated as follows. Activated by binding of S100B which releases autoinhibitory N-lobe interactions, enabling ATP to bind and the autophosphorylation of Ser-281. Thr-444 then undergoes calcium-dependent phosphorylation by STK24/MST3. Interactions between phosphorylated Thr-444 and the N-lobe promote additional structural changes that complete the activation of the kinase. Autoinhibition is also released by the binding of MOB1/MOBKL1A and MOB2/HCCA2 to the N-terminal of STK38. In terms of biological role, serine/threonine-protein kinase that acts as a negative regulator of MAP3K1/2 signaling. Converts MAP3K2 from its phosphorylated form to its non-phosphorylated form and inhibits autophosphorylation of MAP3K2. Acts as an ufmylation 'reader' in a kinase-independent manner: specifically recognizes and binds mono-ufmylated histone H4 in response to DNA damage, promoting the recruitment of SUV39H1 to the double-strand breaks, resulting in ATM activation. The sequence is that of Serine/threonine-protein kinase 38 from Homo sapiens (Human).